We begin with the raw amino-acid sequence, 313 residues long: ADP-L-glycero-D-manno-heptose-6-epimerase (313 aa).

Residues 10–11 (MI), 31–32 (DN), Lys-38, Arg-53, 75–79 (EGACS), and Asn-92 each bind NADP(+). The Proton acceptor role is filled by Tyr-139. Residue Lys-143 coordinates NADP(+). Position 174 (Asn-174) interacts with substrate. NADP(+) contacts are provided by Val-175 and Lys-183. Lys-183 (proton acceptor) is an active-site residue. Substrate contacts are provided by residues Ser-185, His-192, 206–209 (FAGS), Arg-214, and Tyr-277.

It belongs to the NAD(P)-dependent epimerase/dehydratase family. HldD subfamily. As to quaternary structure, homopentamer. NADP(+) is required as a cofactor.

It catalyses the reaction ADP-D-glycero-beta-D-manno-heptose = ADP-L-glycero-beta-D-manno-heptose. It participates in nucleotide-sugar biosynthesis; ADP-L-glycero-beta-D-manno-heptose biosynthesis; ADP-L-glycero-beta-D-manno-heptose from D-glycero-beta-D-manno-heptose 7-phosphate: step 4/4. Functionally, catalyzes the interconversion between ADP-D-glycero-beta-D-manno-heptose and ADP-L-glycero-beta-D-manno-heptose via an epimerization at carbon 6 of the heptose. The polypeptide is ADP-L-glycero-D-manno-heptose-6-epimerase (Vibrio campbellii (strain ATCC BAA-1116)).